We begin with the raw amino-acid sequence, 276 residues long: Hydroxyethylthiazole kinase (276 aa).

Met48 contributes to the substrate binding site. Residues Arg124 and Thr175 each coordinate ATP. Position 202 (Gly202) interacts with substrate.

The protein belongs to the Thz kinase family. Mg(2+) is required as a cofactor.

The enzyme catalyses 5-(2-hydroxyethyl)-4-methylthiazole + ATP = 4-methyl-5-(2-phosphooxyethyl)-thiazole + ADP + H(+). It participates in cofactor biosynthesis; thiamine diphosphate biosynthesis; 4-methyl-5-(2-phosphoethyl)-thiazole from 5-(2-hydroxyethyl)-4-methylthiazole: step 1/1. In terms of biological role, catalyzes the phosphorylation of the hydroxyl group of 4-methyl-5-beta-hydroxyethylthiazole (THZ). The polypeptide is Hydroxyethylthiazole kinase (Clostridium beijerinckii (strain ATCC 51743 / NCIMB 8052) (Clostridium acetobutylicum)).